The sequence spans 60 residues: Large ribosomal subunit protein uL30 (60 aa).

It belongs to the universal ribosomal protein uL30 family. Part of the 50S ribosomal subunit.

The polypeptide is Large ribosomal subunit protein uL30 (Amoebophilus asiaticus (strain 5a2)).